Reading from the N-terminus, the 435-residue chain is MAAAKHFTYVILGGGVAAGYAAREFAKQGVKPGELAIISKESVAPYERPALSKGYLFPQNAARLPGFHTCVGSGGERLLPEWYSEKGIELILSTEIVKADLASKTLTSSADATFTYDTLLIATGSSVIKLTDFGVQGAEANDILYLRDIEDADKLVAAMQAKKDGKAVIVGGGYIGLELSAALKTNNFDVTMVYPEPWCMPRLFTSGLAAFYEGYYANKGIHIIKGTVAVGFDADANGDVTAVKLKNGNVLEADIVIVGVGGRPLTHLFKGQVAEEKGGIKTDAFFETSVPGVYAIADVAAFPMKLYNEIRRVEHVDHARKSAEQAVKAIKAKEAGESVPEYDYLPYFYSRSFDLSWQFYGDNVGEDVLFGDNDPTAAKPKFGSYWIKDGKVVGVFLEGGSAEENQVIAKVARAQPPVADVEALKKEGLDFAAKV.

Residues 14–17 (GGVA), Glu-41, Arg-48, Lys-53, Ile-96, and 147–148 (RD) contribute to the FAD site. NAD(+) is bound by residues 172-178 (GGYIGLE), Glu-196, Arg-202, and Gly-261. 174-178 (YIGLE) contributes to the NADP(+) binding site. 2 residues coordinate NADP(+): Arg-202 and Gly-261. Asp-298 serves as a coordination point for FAD. 314 to 315 (EH) serves as a coordination point for NAD(+). NADP(+) is bound at residue 314–315 (EH). Position 316 (Val-316) interacts with FAD. Arg-320 is a binding site for L-ascorbate. Position 349 (Tyr-349) interacts with FAD. Tyr-349 contributes to the NAD(+) binding site. Tyr-349 is an NADP(+) binding site. Arg-351 contacts L-ascorbate.

This sequence belongs to the FAD-dependent oxidoreductase family. It depends on FAD as a cofactor. As to expression, expressed in anthers.

It is found in the cytoplasm. The catalysed reaction is 2 monodehydro-L-ascorbate radical + NADH + H(+) = 2 L-ascorbate + NAD(+). Catalyzes the conversion of monodehydroascorbate to ascorbate, oxidizing NADH in the process. Ascorbate is a major antioxidant against reactive oxygen species (ROS) and nitric oxide (NO). The sequence is that of Monodehydroascorbate reductase 4, cytosolic from Oryza sativa subsp. japonica (Rice).